The chain runs to 533 residues: 2-isopropylmalate synthase (533 aa).

One can recognise a Pyruvate carboxyltransferase domain in the interval 8–269; it reads ILIFDTTLRD…YFNPFLGRPA (262 aa). The Mn(2+) site is built by aspartate 17, histidine 208, histidine 210, and asparagine 244. Positions 408–533 are regulatory domain; the sequence is RLERVQVSCG…REHPPVVASL (126 aa).

The protein belongs to the alpha-IPM synthase/homocitrate synthase family. LeuA type 1 subfamily. Homodimer. It depends on Mn(2+) as a cofactor.

It is found in the cytoplasm. It carries out the reaction 3-methyl-2-oxobutanoate + acetyl-CoA + H2O = (2S)-2-isopropylmalate + CoA + H(+). It participates in amino-acid biosynthesis; L-leucine biosynthesis; L-leucine from 3-methyl-2-oxobutanoate: step 1/4. Its function is as follows. Catalyzes the condensation of the acetyl group of acetyl-CoA with 3-methyl-2-oxobutanoate (2-ketoisovalerate) to form 3-carboxy-3-hydroxy-4-methylpentanoate (2-isopropylmalate). This chain is 2-isopropylmalate synthase, found in Synechocystis sp. (strain ATCC 27184 / PCC 6803 / Kazusa).